The following is a 142-amino-acid chain: uncharacterized protein (142 aa).

Positions 1 to 20 are cleaved as a signal peptide; it reads MPSVNEFFIFFLIVWHTCEC. A glycan (N-linked (GlcNAc...) asparagine) is linked at Asn80.

This is an uncharacterized protein from Dictyostelium discoideum (Social amoeba).